Consider the following 549-residue polypeptide: Glucose-6-phosphate isomerase (549 aa).

E353 functions as the Proton donor in the catalytic mechanism. Active-site residues include H384 and K513.

The protein belongs to the GPI family.

It is found in the cytoplasm. It carries out the reaction alpha-D-glucose 6-phosphate = beta-D-fructose 6-phosphate. Its pathway is carbohydrate biosynthesis; gluconeogenesis. It functions in the pathway carbohydrate degradation; glycolysis; D-glyceraldehyde 3-phosphate and glycerone phosphate from D-glucose: step 2/4. Its function is as follows. Catalyzes the reversible isomerization of glucose-6-phosphate to fructose-6-phosphate. This Brucella melitensis biotype 2 (strain ATCC 23457) protein is Glucose-6-phosphate isomerase.